The following is a 34-amino-acid chain: Photosystem II reaction center protein Y (34 aa).

Residues 1–5 (DWRVL) lie on the Lumenal side of the membrane. The helical transmembrane segment at 6–22 (VVLLPVLLAAGWAVRNI) threads the bilayer. Residues 23–34 (LPYAVKQVQKLL) lie on the Cytoplasmic side of the membrane.

It belongs to the PsbY family. As to quaternary structure, PSII is composed of 1 copy each of membrane proteins PsbA, PsbB, PsbC, PsbD, PsbE, PsbF, PsbH, PsbI, PsbJ, PsbK, PsbL, PsbM, PsbT, PsbX, PsbY, PsbZ, Psb30/Ycf12, peripheral proteins PsbO, CyanoQ (PsbQ), PsbU, PsbV and a large number of cofactors. It forms dimeric complexes. This protein is only loosely associated with PSII, and is not often found in crystals. PSII binds multiple chlorophylls, carotenoids and specific lipids. serves as cofactor.

It localises to the cellular thylakoid membrane. Loosely associated component of the core of photosystem II (PSII). PSII is a light-driven water plastoquinone oxidoreductase, using light energy to abstract electrons from H(2)O, generating a proton gradient subsequently used for ATP formation. The protein is Photosystem II reaction center protein Y of Thermostichus vulcanus (Synechococcus vulcanus).